Reading from the N-terminus, the 305-residue chain is Small ribosomal subunit protein bS1B (305 aa).

S1 motif domains follow at residues 29–98 (GQTV…LSRR), 116–180 (GKTL…LTQR), and 194–262 (GNIY…LSTR).

It belongs to the bacterial ribosomal protein bS1 family.

In terms of biological role, binds mRNA. This is Small ribosomal subunit protein bS1B (rps1b) from Synechocystis sp. (strain ATCC 27184 / PCC 6803 / Kazusa).